We begin with the raw amino-acid sequence, 807 residues long: Poly-beta-1,6-N-acetyl-D-glucosamine export protein (807 aa).

Residues 1-26 (MYSSSRKRCPKTKWALKLLTAAFLAA) form the signal peptide. 3 TPR repeats span residues 98–131 (ARGYAAVAVAYRNLQQWQNSLTLWQKALSLEPQN), 165–198 (KANLLAEAYIYKLAGRHQDELRAMTESLPENAST), and 279–311 (RIQVDHLGALLTRDRYKDVISHYQRLKKTGQII).

It localises to the cell outer membrane. In terms of biological role, exports the biofilm adhesin polysaccharide poly-beta-1,6-N-acetyl-D-glucosamine (PGA) across the outer membrane. The PGA transported seems to be partially N-deacetylated since N-deacetylation of PGA by PgaB is needed for PGA export through the PgaA porin. In Escherichia coli O157:H7, this protein is Poly-beta-1,6-N-acetyl-D-glucosamine export protein (pgaA).